A 549-amino-acid chain; its full sequence is Cation/acetate symporter ActP (549 aa).

Helical transmembrane passes span W33–A53, L77–F97, G103–E123, I148–G168, I183–A203, W206–V226, I262–L282, G303–V323, L355–L375, V404–E424, I428–L448, G464–V484, and I493–F513.

This sequence belongs to the sodium:solute symporter (SSF) (TC 2.A.21) family.

The protein resides in the cell inner membrane. Functionally, transports acetate. This is Cation/acetate symporter ActP from Escherichia fergusonii (strain ATCC 35469 / DSM 13698 / CCUG 18766 / IAM 14443 / JCM 21226 / LMG 7866 / NBRC 102419 / NCTC 12128 / CDC 0568-73).